Consider the following 151-residue polypeptide: Deoxyuridine 5'-triphosphate nucleotidohydrolase (151 aa).

Substrate is bound by residues 70–72, N83, 87–89, and M97; these read RSG and LID.

This sequence belongs to the dUTPase family. It depends on Mg(2+) as a cofactor.

The enzyme catalyses dUTP + H2O = dUMP + diphosphate + H(+). It participates in pyrimidine metabolism; dUMP biosynthesis; dUMP from dCTP (dUTP route): step 2/2. Functionally, this enzyme is involved in nucleotide metabolism: it produces dUMP, the immediate precursor of thymidine nucleotides and it decreases the intracellular concentration of dUTP so that uracil cannot be incorporated into DNA. This chain is Deoxyuridine 5'-triphosphate nucleotidohydrolase, found in Ectopseudomonas mendocina (strain ymp) (Pseudomonas mendocina).